We begin with the raw amino-acid sequence, 489 residues long: Adenylosuccinate synthetase 2, chloroplastic (489 aa).

The transit peptide at 1–54 (MPLASLSLDPAPFPLIRPAAGWSGRVLPVPGPAPRLCRPLRAAPVAPATTDEPS) directs the protein to the chloroplast. GTP-binding positions include 76-82 (GDEGKGK) and 104-106 (GHT). Aspartate 77 functions as the Proton acceptor in the catalytic mechanism. The Mg(2+) site is built by aspartate 77 and glycine 104. IMP-binding positions include 77–80 (DEGK), 102–105 (NAGH), threonine 194, arginine 208, glutamine 288, threonine 303, and arginine 367. The active-site Proton donor is the histidine 105. Residue 363–369 (TTTGRPR) coordinates substrate. Residues arginine 369, 395 to 397 (KLD), and 478 to 480 (GVG) contribute to the GTP site.

It belongs to the adenylosuccinate synthetase family. In terms of assembly, homodimer. Mg(2+) is required as a cofactor.

The protein localises to the plastid. The protein resides in the chloroplast. It carries out the reaction IMP + L-aspartate + GTP = N(6)-(1,2-dicarboxyethyl)-AMP + GDP + phosphate + 2 H(+). It participates in purine metabolism; AMP biosynthesis via de novo pathway; AMP from IMP: step 1/2. Plays an important role in the de novo pathway and in the salvage pathway of purine nucleotide biosynthesis. Catalyzes the first committed step in the biosynthesis of AMP from IMP. The polypeptide is Adenylosuccinate synthetase 2, chloroplastic (Sorghum bicolor (Sorghum)).